The chain runs to 2000 residues: E3 ubiquitin-protein ligase TTC3 (2000 aa).

The interval 20–249 is interaction with POLG; sequence MDDFAEGGLS…RHSCMQCVKQ (230 aa). TPR repeat units follow at residues 250–283 and 284–317; these read GELM…RPEN and HLLY…KNTW. A Phosphoserine modification is found at S397. The interval 442 to 478 is disordered; that stretch reads CDCHPEFLPPPSQPPRHKGKQKSRNNESEKPSSNSQV. TPR repeat units lie at residues 556 to 592 and 596 to 629; these read VLVV…YPNE and CLAY…ICRL. The disordered stretch occupies residues 804 to 828; the sequence is AQERMEEDLRESNPPKPEEPEETVE. S1029 carries the post-translational modification Phosphoserine. Disordered regions lie at residues 1041-1087, 1233-1308, 1423-1448, 1806-1839, and 1894-1947; these read NKGK…GPFA, FQPD…PEDA, QSST…SSDS, LEVK…QSQK, and EEQK…VPAP. A compositionally biased stretch (polar residues) spans 1059-1070; the sequence is GTASVTPSSETV. S1080 carries the phosphoserine modification. Residues 1268-1277 are compositionally biased toward low complexity; the sequence is DSDSSSGSAS. A compositionally biased stretch (polar residues) spans 1829-1839; it reads GQATRSSQSQK. The span at 1894 to 1911 shows a compositional bias: basic and acidic residues; sequence EEQKKKKPNPGKDKKTSE. Residues 1912–1934 are compositionally biased toward low complexity; sequence AHPAASVSKSSPSPPLAAAGPSA. Residues 1952–1991 form an RING-type; atypical zinc finger; that stretch reads CQICHEIFKSKNMRVLKCGHKFHKGCFKQWLKGQSTCPTC.

As to quaternary structure, interacts (when phosphorylated on Ser-397) with AKT1, AKT2 and AKT3 (when phosphorylated). Interacts with CIT. Interacts with POLG. Interacts with HSP70. Interacts with SMURF2. In terms of processing, phosphorylation on Ser-397 by Akt is required for ubiquitin ligase activity. Proteolytically cleaved into differently sized N- and C-terminal fragments.

The protein localises to the nucleus. Its subcellular location is the cytoplasm. It is found in the golgi apparatus. It carries out the reaction S-ubiquitinyl-[E2 ubiquitin-conjugating enzyme]-L-cysteine + [acceptor protein]-L-lysine = [E2 ubiquitin-conjugating enzyme]-L-cysteine + N(6)-ubiquitinyl-[acceptor protein]-L-lysine.. It participates in protein modification; protein ubiquitination. Its function is as follows. E3 ubiquitin-protein ligase which catalyzes the formation of 'Lys-48'-polyubiquitin chains. Mediates the ubiquitination and subsequent degradation of phosphorylated Akt (AKT1, AKT2 and AKT3) in the nucleus. Acts as a terminal regulator of Akt signaling after activation; its phosphorylation by Akt, which is a prerequisite for ubiquitin ligase activity, suggests the existence of a regulation mechanism required to control Akt levels after activation. Positively regulates TGFB1-induced epithelial-mesenchymal transition and myofibroblast differentiation by mediating the ubiquitination and subsequent degradation of SMURF2. Regulates neuronal differentiation by regulating actin remodeling and Golgi organization via a signaling cascade involving RHOA, CIT and ROCK. Inhibits cell proliferation. In Rattus norvegicus (Rat), this protein is E3 ubiquitin-protein ligase TTC3.